The primary structure comprises 191 residues: Lipid A acyltransferase PagP (191 aa).

The first 23 residues, 1–23, serve as a signal peptide directing secretion; sequence MRLFYQRISLLISLCGFFSAAWA. Catalysis depends on residues His-62, Asp-105, and Ser-106.

Belongs to the lipid A palmitoyltransferase family. In terms of assembly, homodimer.

Its subcellular location is the cell outer membrane. It catalyses the reaction a lipid A + a 1,2-diacyl-sn-glycero-3-phosphocholine = a hepta-acyl lipid A + a 2-acyl-sn-glycero-3-phosphocholine. The catalysed reaction is a lipid IVA + a 1,2-diacyl-sn-glycero-3-phosphocholine = a lipid IVB + a 2-acyl-sn-glycero-3-phosphocholine. It carries out the reaction a lipid IIA + a 1,2-diacyl-sn-glycero-3-phosphocholine = a lipid IIB + a 2-acyl-sn-glycero-3-phosphocholine. Its function is as follows. Transfers a fatty acid residue from the sn-1 position of a phospholipid to the N-linked hydroxyfatty acid chain on the proximal unit of lipid A or its precursors. The protein is Lipid A acyltransferase PagP of Sodalis glossinidius (strain morsitans).